We begin with the raw amino-acid sequence, 526 residues long: Peptide chain release factor 3 (526 aa).

The tr-type G domain occupies 8 to 277 (GKRRTFAIIS…GLTDWAPAPQ (270 aa)). Residues 17–24 (SHPDAGKT), 85–89 (DTPGH), and 139–142 (NKLD) contribute to the GTP site.

This sequence belongs to the TRAFAC class translation factor GTPase superfamily. Classic translation factor GTPase family. PrfC subfamily.

It is found in the cytoplasm. Functionally, increases the formation of ribosomal termination complexes and stimulates activities of RF-1 and RF-2. It binds guanine nucleotides and has strong preference for UGA stop codons. It may interact directly with the ribosome. The stimulation of RF-1 and RF-2 is significantly reduced by GTP and GDP, but not by GMP. In Aliivibrio fischeri (strain ATCC 700601 / ES114) (Vibrio fischeri), this protein is Peptide chain release factor 3.